The following is a 169-amino-acid chain: Probable chorismate pyruvate-lyase (169 aa).

Arg71, Ile110, and Glu150 together coordinate substrate.

The protein belongs to the UbiC family.

Its subcellular location is the cytoplasm. The catalysed reaction is chorismate = 4-hydroxybenzoate + pyruvate. The protein operates within cofactor biosynthesis; ubiquinone biosynthesis. In terms of biological role, removes the pyruvyl group from chorismate, with concomitant aromatization of the ring, to provide 4-hydroxybenzoate (4HB) for the ubiquinone pathway. In Acinetobacter baumannii (strain ATCC 17978 / DSM 105126 / CIP 53.77 / LMG 1025 / NCDC KC755 / 5377), this protein is Probable chorismate pyruvate-lyase.